The chain runs to 355 residues: GTPase Obg (355 aa).

The 159-residue stretch at 1-159 (MKLVDEAEIL…RLLKLELKLL (159 aa)) folds into the Obg domain. The OBG-type G domain occupies 160–342 (ADVGLLGFPN…IMKDVMAFFD (183 aa)). GTP is bound by residues 166–173 (GFPNAGKS), 191–195 (FTTLY), 213–216 (DVPG), 292–295 (NKAD), and 323–325 (SAL). Ser173 and Thr193 together coordinate Mg(2+).

It belongs to the TRAFAC class OBG-HflX-like GTPase superfamily. OBG GTPase family. As to quaternary structure, monomer. Mg(2+) is required as a cofactor.

The protein localises to the cytoplasm. In terms of biological role, an essential GTPase which binds GTP, GDP and possibly (p)ppGpp with moderate affinity, with high nucleotide exchange rates and a fairly low GTP hydrolysis rate. Plays a role in control of the cell cycle, stress response, ribosome biogenesis and in those bacteria that undergo differentiation, in morphogenesis control. This is GTPase Obg from Xanthomonas euvesicatoria pv. vesicatoria (strain 85-10) (Xanthomonas campestris pv. vesicatoria).